Consider the following 603-residue polypeptide: Penicillin-binding protein activator LpoA (603 aa).

The first 26 residues, 1–26 (MANMTPRKNSVTRLIAPVALALTLAA), serve as a signal peptide directing secretion. C27 carries the N-palmitoyl cysteine lipid modification. C27 is lipidated: S-diacylglycerol cysteine.

This sequence belongs to the LpoA family. In terms of assembly, interacts with PBP1a.

It localises to the cell outer membrane. In terms of biological role, regulator of peptidoglycan synthesis that is essential for the function of penicillin-binding protein 1A (PBP1a). The protein is Penicillin-binding protein activator LpoA of Aliivibrio fischeri (strain ATCC 700601 / ES114) (Vibrio fischeri).